The chain runs to 195 residues: uncharacterized protein (195 aa).

Residues isoleucine 175–glycine 195 form a helical membrane-spanning segment.

The protein localises to the membrane. This is an uncharacterized protein from Methanocaldococcus jannaschii (strain ATCC 43067 / DSM 2661 / JAL-1 / JCM 10045 / NBRC 100440) (Methanococcus jannaschii).